The primary structure comprises 211 residues: N-(5'-phosphoribosyl)anthranilate isomerase (211 aa).

It belongs to the TrpF family.

The catalysed reaction is N-(5-phospho-beta-D-ribosyl)anthranilate = 1-(2-carboxyphenylamino)-1-deoxy-D-ribulose 5-phosphate. It functions in the pathway amino-acid biosynthesis; L-tryptophan biosynthesis; L-tryptophan from chorismate: step 3/5. In Methanococcus maripaludis (strain DSM 14266 / JCM 13030 / NBRC 101832 / S2 / LL), this protein is N-(5'-phosphoribosyl)anthranilate isomerase.